The primary structure comprises 92 residues: MVENVIWPAYFDAALSRRDGRRVPMELAVEEPSIDEIATAVQQVGYDAVVERDVAYPRRHWDAAGRVLVKDADDAKNTLVQAVAAYVGALRD.

The protein belongs to the SRP19 family. Part of the signal recognition particle protein translocation system, which is composed of SRP and FtsY. Archaeal SRP consists of a 7S RNA molecule of 300 nucleotides and two protein subunits: SRP54 and SRP19.

It is found in the cytoplasm. Functionally, involved in targeting and insertion of nascent membrane proteins into the cytoplasmic membrane. Binds directly to 7S RNA and mediates binding of the 54 kDa subunit of the SRP. The sequence is that of Signal recognition particle 19 kDa protein from Halobacterium salinarum (strain ATCC 29341 / DSM 671 / R1).